Consider the following 708-residue polypeptide: MSFKDKDERISCLEAYVTLTSKSSRFTDETEILKMSQRHSGQAGTEAGNGADSPPIVNSKYSTFRDFCSTSSFQDSGYNELKSCSFDNIDKEYLGKKEKGPTLLYEHPETSGLGLTHPLESPTQKKKCILPRKEKDKTPELCETPKISGKKCLPRRRLNVSFALLKGDFESQNSSLESSISQVINLEKNIPSSASGFSRANNFSPLVTSTLKTEEVTSCSQKLRLNFSQQKTSTIDDSKDDCSLFEVECISPIQGNNFKDSITHDFSDSSLCINDENACPELLGSSVSGTTCGTDEDIFVTPISNLVANIRFNASQILSPSPEVRGSISTPEDSGFNSLSLEKSEDSLSDQEGSFQELLQKHKGTPKVGDTIRKTRHLGRSRRLSTLREQSSQSETEEEKQIVHPDSEKRAAAASAISEGQLSSDESGDLTFSLKNLSKTPALQLVHELFMKSKRKRLQENSGHEFLEQGDGEKIAVLQCILAGLIGKKMGIEKLDILTELKYRNLKHILAMVLESLTAESLCSVWKVSRNWREIVVQDKNANRRRKFYITQLKTDSEGAVLNVEDAATRLQLLNRSALRSVQAQARIPGSQREQGSTLSPWGEVLTPLASSSVTHLSSKQEEYVKVAKTLFTDEALKPCPRCQSPAKYQPYKKRGLCSRTACGFDFCVLCLCAYHGSEECSRGAAKPRNRKDALPGSAQSKRNLKRL.

A disordered region spans residues 35–55 (MSQRHSGQAGTEAGNGADSPP). Position 76 is a phosphoserine (serine 76). Phosphothreonine is present on threonine 234. Residues 320 to 426 (PSPEVRGSIS…ISEGQLSSDE (107 aa)) form a disordered region. Positions 327-337 (SISTPEDSGFN) are enriched in polar residues. Serine 334 is modified (phosphoserine). Over residues 374–385 (KTRHLGRSRRLS) the composition is skewed to basic residues. Basic and acidic residues predominate over residues 399–411 (EKQIVHPDSEKRA). The region spanning 490–547 (MGIEKLDILTELKYRNLKHILAMVLESLTAESLCSVWKVSRNWREIVVQDKNANRRRK) is the F-box domain. The ZBR-type zinc-finger motif lies at 636 to 684 (ALKPCPRCQSPAKYQPYKKRGLCSRTACGFDFCVLCLCAYHGSEECSRG). 8 residues coordinate Zn(2+): cysteine 640, cysteine 643, cysteine 658, cysteine 663, cysteine 668, cysteine 671, histidine 676, and cysteine 681. Residues 682–708 (SRGAAKPRNRKDALPGSAQSKRNLKRL) are disordered.

As to quaternary structure, part of a SCF (SKP1-cullin-F-box) protein ligase complex. According to PubMed:34595750 interaction with SKP1 does not occur. Interacts with ANAPC2; the interaction is direct, ANAPC4, CDC16, CDC23; the interaction is direct, ANAPC10; the interaction is direct and CDC26, during spermatogenesis. May interact with CDC20. In terms of processing, phosphorylated on Ser-76, Thr-234 and Ser-334 in response to calcium, which is a prerequisite for ubiquitination and proteasomal degradation. Ubiquitinated in response to calcium, which promotes proteasomal degradation. As to expression, expressed in the testis.

It functions in the pathway protein modification; protein ubiquitination. Its function is as follows. Required to establish and maintain the arrest of oocytes at the second meiotic metaphase until fertilization. Acts by inhibiting the anaphase-promoting complex/cyclosome (APC/C) ubiquitin ligase. Probably recognizes and binds to some phosphorylated proteins and promotes their ubiquitination and degradation. Plays a vital role in modulating the ubiquitilation of CCNB1 and CDK1 during gametogenesis. In Homo sapiens (Human), this protein is F-box only protein 43 (FBXO43).